We begin with the raw amino-acid sequence, 322 residues long: Thioredoxin reductase (322 aa).

Residues 11–14 (SGPA), 40–41 (IA), glutamine 45, asparagine 54, valine 87, and cysteine 145 each bind FAD. A disulfide bond links cysteine 142 and cysteine 145. A Phosphoserine modification is found at serine 192. Threonine 278 is subject to Phosphothreonine. Serine 279 carries the post-translational modification Phosphoserine. Residues aspartate 288 and 295–297 (RQA) each bind FAD.

Belongs to the class-II pyridine nucleotide-disulfide oxidoreductase family. In terms of assembly, homodimer. FAD is required as a cofactor.

It is found in the cytoplasm. The catalysed reaction is [thioredoxin]-dithiol + NADP(+) = [thioredoxin]-disulfide + NADPH + H(+). The chain is Thioredoxin reductase (trr1) from Schizosaccharomyces pombe (strain 972 / ATCC 24843) (Fission yeast).